A 118-amino-acid polypeptide reads, in one-letter code: MVPRVWSLMRFLIKGSVAGGAIYLVYDQDPLGPSDKSQAALQKAEEVVPPAVYQFSQYVCEQTGLKIPQLPAPPKFNFHIRDYWNSGVIKVMSALSVAPSKAREYSKEGWEYLKERTK.

At 1-7 the chain is on the mitochondrial matrix side; it reads MVPRVWS. The chain crosses the membrane as a helical span at residues 8-26; it reads LMRFLIKGSVAGGAIYLVY. Residues 27–118 are Mitochondrial intermembrane-facing; that stretch reads DQDPLGPSDK…GWEYLKERTK (92 aa).

It belongs to the MICOS complex subunit Mic13 family. In terms of assembly, component of the mitochondrial contact site and cristae organizing system (MICOS) complex, composed of at least MICOS10/MIC10, CHCHD3/MIC19, CHCHD6/MIC25, APOO/MIC26, MICOS13/MIC13, APOOL/MIC27 and IMMT/MIC60. The MICOS complex associates with mitochondrial outer membrane proteins SAMM50, MTX1 and MTX2 (together described as components of the mitochondrial outer membrane sorting assembly machinery (SAM) complex) and DNAJC11, mitochondrial inner membrane protein TMEM11 and with HSPA9. The MICOS and SAM complexes together with DNAJC11 are part of a large protein complex spanning both membranes termed the mitochondrial intermembrane space bridging (MIB) complex.

It is found in the mitochondrion inner membrane. Its function is as follows. Component of the MICOS complex, a large protein complex of the mitochondrial inner membrane that plays crucial roles in the maintenance of crista junctions, inner membrane architecture, and formation of contact sites to the outer membrane. Constituent of mature MICOS complex, it is required for the formation of cristae junction (CJ) and maintenance of cristae morphology. Required for the incorporation of MICOS10/MIC10 into the MICOS complex. The sequence is that of MICOS complex subunit MIC13 from Sus scrofa (Pig).